A 273-amino-acid polypeptide reads, in one-letter code: F-actin-capping protein subunit alpha (273 aa).

This sequence belongs to the F-actin-capping protein alpha subunit family. In terms of assembly, component of the F-actin capping complex, composed of a heterodimer of an alpha and a beta subunit.

It localises to the cytoplasm. The protein localises to the cytoskeleton. The protein resides in the actin patch. Functionally, F-actin-capping proteins bind in a Ca(2+)-independent manner to the fast growing ends of actin filaments (barbed end) thereby blocking the exchange of subunits at these ends. Unlike other capping proteins (such as gelsolin and severin), these proteins do not sever actin filaments. This Aspergillus oryzae (strain ATCC 42149 / RIB 40) (Yellow koji mold) protein is F-actin-capping protein subunit alpha (cap1).